Consider the following 157-residue polypeptide: MSEKYTNEKYVVTWDMFHMHARKLAERLLPASQWKGIIAVSRGGLFPAAVLARELSIRHVETVCISSYDHDEQGELKVLHAAQTDGEGFIVVDDLVDTGNTAKEIRKMYPKAKFVTVFAKPAGTPLVDDYVIDIPQETWIEQPWDLGITFVPPLARK.

5-phospho-alpha-D-ribose 1-diphosphate is bound by residues 42–43 (RG) and 93–101 (DDLVDTGNT). Aspartate 94 is a Mg(2+) binding site. Residues aspartate 97 and isoleucine 140 each contribute to the guanine site. Xanthine-binding residues include aspartate 97 and isoleucine 140. Residues 97–101 (DTGNT) and 139–140 (WI) each bind GMP.

This sequence belongs to the purine/pyrimidine phosphoribosyltransferase family. XGPT subfamily. As to quaternary structure, homotetramer. Mg(2+) serves as cofactor.

Its subcellular location is the cell inner membrane. It carries out the reaction GMP + diphosphate = guanine + 5-phospho-alpha-D-ribose 1-diphosphate. It catalyses the reaction XMP + diphosphate = xanthine + 5-phospho-alpha-D-ribose 1-diphosphate. The enzyme catalyses IMP + diphosphate = hypoxanthine + 5-phospho-alpha-D-ribose 1-diphosphate. It functions in the pathway purine metabolism; GMP biosynthesis via salvage pathway; GMP from guanine: step 1/1. It participates in purine metabolism; XMP biosynthesis via salvage pathway; XMP from xanthine: step 1/1. Functionally, purine salvage pathway enzyme that catalyzes the transfer of the ribosyl-5-phosphate group from 5-phospho-alpha-D-ribose 1-diphosphate (PRPP) to the N9 position of the 6-oxopurines guanine and xanthine to form the corresponding ribonucleotides GMP (guanosine 5'-monophosphate) and XMP (xanthosine 5'-monophosphate), with the release of PPi. To a lesser extent, also acts on hypoxanthine. The sequence is that of Xanthine-guanine phosphoribosyltransferase from Actinobacillus pleuropneumoniae serotype 5b (strain L20).